Here is a 165-residue protein sequence, read N- to C-terminus: Phosphopantetheine adenylyltransferase (165 aa).

Ser10 contacts substrate. ATP-binding positions include Ser10–Phe11 and His18. Substrate is bound by residues Lys42, Thr79, and Arg93. Residues Gly94–Arg96, Glu104, and Val129–Thr135 contribute to the ATP site.

This sequence belongs to the bacterial CoaD family. Homohexamer. It depends on Mg(2+) as a cofactor.

The protein localises to the cytoplasm. It catalyses the reaction (R)-4'-phosphopantetheine + ATP + H(+) = 3'-dephospho-CoA + diphosphate. It functions in the pathway cofactor biosynthesis; coenzyme A biosynthesis; CoA from (R)-pantothenate: step 4/5. Reversibly transfers an adenylyl group from ATP to 4'-phosphopantetheine, yielding dephospho-CoA (dPCoA) and pyrophosphate. The sequence is that of Phosphopantetheine adenylyltransferase from Rhodopseudomonas palustris (strain BisA53).